The chain runs to 238 residues: 1-(5-phosphoribosyl)-5-[(5-phosphoribosylamino)methylideneamino] imidazole-4-carboxamide isomerase (238 aa).

The Proton acceptor role is filled by D8. The active-site Proton donor is the D130.

Belongs to the HisA/HisF family.

It is found in the cytoplasm. It carries out the reaction 1-(5-phospho-beta-D-ribosyl)-5-[(5-phospho-beta-D-ribosylamino)methylideneamino]imidazole-4-carboxamide = 5-[(5-phospho-1-deoxy-D-ribulos-1-ylimino)methylamino]-1-(5-phospho-beta-D-ribosyl)imidazole-4-carboxamide. It functions in the pathway amino-acid biosynthesis; L-histidine biosynthesis; L-histidine from 5-phospho-alpha-D-ribose 1-diphosphate: step 4/9. The chain is 1-(5-phosphoribosyl)-5-[(5-phosphoribosylamino)methylideneamino] imidazole-4-carboxamide isomerase from Methanococcus maripaludis (strain C5 / ATCC BAA-1333).